A 1578-amino-acid polypeptide reads, in one-letter code: FERM and PDZ domain-containing protein 1 (1578 aa).

Residues 57–135 enclose the PDZ domain; the sequence is TVKIDKDTLL…SLSITVVRCT (79 aa). Positions 181 to 496 constitute an FERM domain; that stretch reads NVLKLYLENG…GYYRLLVDPV (316 aa). Disordered stretches follow at residues 555–616, 720–743, and 759–831; these read KEEQ…EEDD, SDSS…QGWT, and PLAF…VKKY. A compositionally biased stretch (polar residues) spans 720-729; the sequence is SDSSESTASR. Low complexity predominate over residues 730–742; sequence QGGAPPAWGQQGW. Residues 793–811 are compositionally biased toward polar residues; sequence AEPSATSLQNKASTSSPEN. Positions 822–831 are enriched in basic residues; the sequence is PSRRGGVKKY. The tract at residues 924-931 is important for interaction with GPSM2; the sequence is EPETMETK. Disordered regions lie at residues 950 to 1030, 1070 to 1194, and 1347 to 1374; these read PNNK…LASN, KYTE…QGCQ, and PQPE…SAGS. Residues 968 to 986 show a composition bias toward polar residues; the sequence is TPHCSNPGSSGPDTAQARP. Residues 1100-1117 are compositionally biased toward basic and acidic residues; it reads TKEEPQGQLSLERDREVT. Residues 1139–1150 are compositionally biased toward polar residues; that stretch reads DVSNNVSQTLDI.

In terms of assembly, interacts with GPSM1. Interacts with GPSM2 (via TPR repeat region).

It is found in the cytoplasm. It localises to the cytosol. The protein resides in the cell membrane. Its function is as follows. Stabilizes membrane-bound GPSM1, and thereby promotes its interaction with GNAI1. The polypeptide is FERM and PDZ domain-containing protein 1 (FRMPD1) (Homo sapiens (Human)).